The chain runs to 93 residues: Large ribosomal subunit protein eL43 (93 aa).

The C4-type zinc-finger motif lies at 39–60; that stretch reads CEFCGKYGVKRKAVGIWGCKDC.

The protein belongs to the eukaryotic ribosomal protein eL43 family.

This is Large ribosomal subunit protein eL43 (RPL37A) from Brassica rapa subsp. rapa (Turnip).